Consider the following 336-residue polypeptide: Formimidoylglutamase (336 aa).

Mn(2+)-binding residues include histidine 129, aspartate 160, histidine 162, aspartate 164, aspartate 257, and aspartate 259.

Belongs to the arginase family. Requires Mn(2+) as cofactor.

The catalysed reaction is N-formimidoyl-L-glutamate + H2O = formamide + L-glutamate. The protein operates within amino-acid degradation; L-histidine degradation into L-glutamate; L-glutamate from N-formimidoyl-L-glutamate (hydrolase route): step 1/1. Catalyzes the conversion of N-formimidoyl-L-glutamate to L-glutamate and formamide. In Vibrio vulnificus (strain CMCP6), this protein is Formimidoylglutamase.